Consider the following 353-residue polypeptide: Nucleotide-binding protein sce5766 (353 aa).

Residue 27–34 (GLSGAGKS) coordinates ATP. 76 to 79 (DVRV) provides a ligand contact to GTP. The tract at residues 310–353 (SGVPSGVGEGMAGAPGVDLRLAQPGATPSEPRPASDTSVTGGER) is disordered. The span at 344 to 353 (SDTSVTGGER) shows a compositional bias: polar residues.

Belongs to the RapZ-like family.

Its function is as follows. Displays ATPase and GTPase activities. The polypeptide is Nucleotide-binding protein sce5766 (Sorangium cellulosum (strain So ce56) (Polyangium cellulosum (strain So ce56))).